The sequence spans 299 residues: Porphobilinogen deaminase (299 aa).

C242 is modified (S-(dipyrrolylmethanemethyl)cysteine).

The protein belongs to the HMBS family. Monomer. It depends on dipyrromethane as a cofactor.

The enzyme catalyses 4 porphobilinogen + H2O = hydroxymethylbilane + 4 NH4(+). Its pathway is porphyrin-containing compound metabolism; protoporphyrin-IX biosynthesis; coproporphyrinogen-III from 5-aminolevulinate: step 2/4. Tetrapolymerization of the monopyrrole PBG into the hydroxymethylbilane pre-uroporphyrinogen in several discrete steps. This is Porphobilinogen deaminase from Rickettsia typhi (strain ATCC VR-144 / Wilmington).